Reading from the N-terminus, the 550-residue chain is Formate--tetrahydrofolate ligase (550 aa).

Residue 62-69 (TPAGEGKS) coordinates ATP.

Belongs to the formate--tetrahydrofolate ligase family.

The catalysed reaction is (6S)-5,6,7,8-tetrahydrofolate + formate + ATP = (6R)-10-formyltetrahydrofolate + ADP + phosphate. It participates in one-carbon metabolism; tetrahydrofolate interconversion. In Corynebacterium diphtheriae (strain ATCC 700971 / NCTC 13129 / Biotype gravis), this protein is Formate--tetrahydrofolate ligase.